The sequence spans 156 residues: Small ribosomal subunit protein uS7 (156 aa).

This sequence belongs to the universal ribosomal protein uS7 family. As to quaternary structure, part of the 30S ribosomal subunit. Contacts proteins S9 and S11.

Functionally, one of the primary rRNA binding proteins, it binds directly to 16S rRNA where it nucleates assembly of the head domain of the 30S subunit. Is located at the subunit interface close to the decoding center, probably blocks exit of the E-site tRNA. This chain is Small ribosomal subunit protein uS7, found in Blochmanniella pennsylvanica (strain BPEN).